The primary structure comprises 361 residues: Phosphoserine aminotransferase (361 aa).

An L-glutamate-binding site is contributed by arginine 42. Pyridoxal 5'-phosphate-binding positions include 76–77, tryptophan 102, threonine 152, aspartate 172, and glutamine 195; that span reads AT. N6-(pyridoxal phosphate)lysine is present on lysine 196. Residue 237-238 participates in pyridoxal 5'-phosphate binding; it reads NT.

It belongs to the class-V pyridoxal-phosphate-dependent aminotransferase family. SerC subfamily. In terms of assembly, homodimer. Pyridoxal 5'-phosphate is required as a cofactor.

Its subcellular location is the cytoplasm. It catalyses the reaction O-phospho-L-serine + 2-oxoglutarate = 3-phosphooxypyruvate + L-glutamate. The catalysed reaction is 4-(phosphooxy)-L-threonine + 2-oxoglutarate = (R)-3-hydroxy-2-oxo-4-phosphooxybutanoate + L-glutamate. It participates in amino-acid biosynthesis; L-serine biosynthesis; L-serine from 3-phospho-D-glycerate: step 2/3. It functions in the pathway cofactor biosynthesis; pyridoxine 5'-phosphate biosynthesis; pyridoxine 5'-phosphate from D-erythrose 4-phosphate: step 3/5. Its function is as follows. Catalyzes the reversible conversion of 3-phosphohydroxypyruvate to phosphoserine and of 3-hydroxy-2-oxo-4-phosphonooxybutanoate to phosphohydroxythreonine. The polypeptide is Phosphoserine aminotransferase (Stenotrophomonas maltophilia (strain K279a)).